Reading from the N-terminus, the 252-residue chain is 5'-nucleotidase SurE (252 aa).

Positions 8, 9, 39, and 95 each coordinate a divalent metal cation.

Belongs to the SurE nucleotidase family. It depends on a divalent metal cation as a cofactor.

It localises to the cytoplasm. It catalyses the reaction a ribonucleoside 5'-phosphate + H2O = a ribonucleoside + phosphate. Functionally, nucleotidase that shows phosphatase activity on nucleoside 5'-monophosphates. The polypeptide is 5'-nucleotidase SurE (Clostridium botulinum (strain Kyoto / Type A2)).